The chain runs to 388 residues: Zinc finger protein ubi-d4 A (388 aa).

A disordered region spans residues 60–190 (GPGSAPGQLY…AKGKGIGSAR (131 aa)). 2 stretches are compositionally biased toward basic and acidic residues: residues 97-107 (PDPEQMLKKEG) and 123-137 (DPIE…RDDD). Residues 156–170 (PDDFLDDLDDEDYEE) are compositionally biased toward acidic residues. Residues 205–228 (YACDICGKRYKNRPGLSYHYAHSH) form a C2H2-type zinc finger. Residues 233 to 264 (EGAGAEDKEDSQPPTPIMHRPEEQKSKKGPDG) are disordered. A compositionally biased stretch (basic and acidic residues) spans 251 to 262 (HRPEEQKSKKGP). PHD-type zinc fingers lie at residues 269 to 329 (NNYC…CKCC) and 326 to 376 (CKCC…CLDL).

It belongs to the requiem/DPF family.

It is found in the cytoplasm. Its subcellular location is the nucleus. May be a transcription factor required for the apoptosis response following survival factor withdrawal from myeloid cells. Might also have a role in the development and maturation of lymphoid cells. This is Zinc finger protein ubi-d4 A (req-a) from Xenopus laevis (African clawed frog).